The primary structure comprises 379 residues: Deoxyuridine 5'-triphosphate nucleotidohydrolase (379 aa).

Belongs to the dUTPase family. The cofactor is Mg(2+).

The catalysed reaction is dUTP + H2O = dUMP + diphosphate + H(+). In terms of biological role, involved in nucleotide metabolism: produces dUMP, the immediate precursor of thymidine nucleotides and decreases the intracellular concentration of dUTP to avoid uracil incorporation into viral DNA. The chain is Deoxyuridine 5'-triphosphate nucleotidohydrolase from Human herpesvirus 7 (strain JI) (HHV-7).